We begin with the raw amino-acid sequence, 704 residues long: Ribosomal RNA large subunit methyltransferase K/L (704 aa).

Belongs to the methyltransferase superfamily. RlmKL family.

The protein resides in the cytoplasm. It catalyses the reaction guanosine(2445) in 23S rRNA + S-adenosyl-L-methionine = N(2)-methylguanosine(2445) in 23S rRNA + S-adenosyl-L-homocysteine + H(+). The catalysed reaction is guanosine(2069) in 23S rRNA + S-adenosyl-L-methionine = N(2)-methylguanosine(2069) in 23S rRNA + S-adenosyl-L-homocysteine + H(+). Functionally, specifically methylates the guanine in position 2445 (m2G2445) and the guanine in position 2069 (m7G2069) of 23S rRNA. The protein is Ribosomal RNA large subunit methyltransferase K/L of Alcanivorax borkumensis (strain ATCC 700651 / DSM 11573 / NCIMB 13689 / SK2).